The chain runs to 421 residues: Testin (421 aa).

In terms of domain architecture, PET spans 92 to 199; it reads MILTNPVAAK…GDVKLPREMD (108 aa). The tract at residues 133 to 164 is disordered; sequence EKQPVAGSEGAQYRKKQLAKQLPAHDQDPSKC. Positions 155-164 are enriched in basic and acidic residues; the sequence is PAHDQDPSKC. LIM zinc-binding domains follow at residues 234 to 297, 299 to 359, and 362 to 421; these read YSCY…CDSE, PRCA…NHAV, and QGCH…KMMS.

It belongs to the prickle / espinas / testin family. As to quaternary structure, interacts via LIM domain 1 with ZYX. Interacts (via LIM domain 3) with ENAH and VASP. Interacts with ALKBH4, talin, actin, alpha-actinin, GRIP1 and PXN. Interacts (via LIM domain 2) with ACTL7A (via N-terminus). Heterodimer with ACTL7A; the heterodimer interacts with ENAH to form a heterotrimer.

Its subcellular location is the cytoplasm. It is found in the cell junction. The protein localises to the focal adhesion. Functionally, scaffold protein that may play a role in cell adhesion, cell spreading and in the reorganization of the actin cytoskeleton. Plays a role in the regulation of cell proliferation. May act as a tumor suppressor. This Canis lupus familiaris (Dog) protein is Testin (TES).